Consider the following 579-residue polypeptide: Tetratricopeptide repeat protein 39C (579 aa).

Residues 182 to 197 (QQGALASDQANHNTST) show a composition bias toward polar residues. The tract at residues 182–202 (QQGALASDQANHNTSTGSGGR) is disordered. TPR repeat units follow at residues 311-344 (SLFIFFKGRVQRLECQINSALASFQDALEFASDQ), 349-382 (HVCLYEIGWCSMIEMSFEDAFRSFERLKNESRWS), and 481-514 (GLKHLLLGAIQKCLGNIKDALQSFQLAAQDEYGR).

The protein belongs to the TTC39 family.

The polypeptide is Tetratricopeptide repeat protein 39C (ttc39c) (Danio rerio (Zebrafish)).